Consider the following 559-residue polypeptide: Non-homologous end joining factor IFFO1 (559 aa).

The interval G21–G57 is disordered. Pro residues predominate over residues P39–G57. The interval A65–R116 is LMNA binding. The IF rod domain occupies N73–K526. Residues R85–R117 are a coiled coil. Residues S158–S187 are disordered. A coiled-coil region spans residues E237–L301. The interval S360–S394 is disordered. Positions E450 to R525 are XCCR4 binding. Required for localization to the double-strand breaks (DSBs). Residues L455–M501 adopt a coiled-coil conformation. Positions T520 to R559 are disordered. Positions R550–R559 are enriched in basic and acidic residues.

The protein belongs to the intermediate filament family. In terms of assembly, forms a heterotetramer with XRCC4. The interaction with XRCC4 is direct, involves LIG4-free XRCC4 and leads to relocalization of IFFO1 at the double-strand break (DSB) sites. Interacts with LMNA; the interaction forms an interior nucleoskeleton and the recruitment to DNA double-strand breaks. In terms of tissue distribution, ubiquitously expressed.

The protein resides in the nucleus. The protein localises to the nucleoplasm. It is found in the nucleus inner membrane. Its subcellular location is the nucleus matrix. In terms of biological role, nuclear matrix protein involved in the immobilization of broken DNA ends and the suppression of chromosome translocation during DNA double-strand breaks (DSBs). Interacts with the nuclear lamina component LMNA, resulting in the formation of a nucleoskeleton that relocalizes to the DSB sites in a XRCC4-dependent manner and promotes the immobilization of the broken ends, thereby preventing chromosome translocation. Acts as a scaffold that allows the DNA repair protein XRCC4 and LMNA to assemble into a complex at the DSB sites. The protein is Non-homologous end joining factor IFFO1 of Homo sapiens (Human).